Here is a 159-residue protein sequence, read N- to C-terminus: Transcription elongation factor GreA (159 aa).

Belongs to the GreA/GreB family.

Its function is as follows. Necessary for efficient RNA polymerase transcription elongation past template-encoded arresting sites. The arresting sites in DNA have the property of trapping a certain fraction of elongating RNA polymerases that pass through, resulting in locked ternary complexes. Cleavage of the nascent transcript by cleavage factors such as GreA or GreB allows the resumption of elongation from the new 3'terminus. GreA releases sequences of 2 to 3 nucleotides. The protein is Transcription elongation factor GreA of Buchnera aphidicola subsp. Cinara cedri (strain Cc).